A 401-amino-acid chain; its full sequence is MSHIQIPPGLTELLQGYTVEVGQQPPDLVDFAVEYFTRLREARRQESDTFIVSPTTFHTQESSAVPVIEEDGESDSDSEDADLEVPVPSKFTRRVSVCAETFNPDEEEEDNDPRVVHPKTDEQRCRLQEACKDILLFKNLDQEQLSQVLDAMFEKIVKTDEHVIDQGDDGDNFYVIERGTYDILVTKDNQTRSVGQYDNRGSFGELALMYNTPRAATIIATSEGSLWGLDRVTFRRIIVKNNAKKRKMFESFIESVPLFKSLEMSERMKIVDVIGEKIYKDGERIIAQGEKADSFYIIESGEVSILIRSKTKSNKNGGNQEVEIAHCHKGQYFGELALVTNKPRAASAYGVGDVKCLVMDVQAFERLLGPCMDIMKRNISHYEEQLVKMFGSNLDLMDPGQ.

Ser2 bears the N-acetylserine mark. Positions Ser2–Leu135 are dimerization and phosphorylation. A phosphoserine mark is found at Ser47, Ser74, Ser76, and Ser96. Residues Glu61–Leu83 are disordered. Over residues Ile68 to Leu83 the composition is skewed to acidic residues. 3',5'-cyclic AMP-binding positions include Leu136–Pro257, Glu205, Arg214, Leu258–Gln401, Glu335, and Arg344. At Thr212 the chain carries Phosphothreonine; by PDPK1. A phosphoserine mark is found at Ser347 and Ser392.

It belongs to the cAMP-dependent kinase regulatory chain family. The inactive form of the enzyme is composed of two regulatory chains and two catalytic chains. Activation by cAMP produces two active catalytic monomers and a regulatory dimer that binds four cAMP molecules. Interacts with AKAP4. Interacts with CBFA2T3. Interacts with the phosphorylated form of PJA2. Interacts with MYRIP. This interaction may link PKA to components of the exocytosis machinery, thus facilitating exocytosis, including insulin release. Forms a complex composed of PRKAR2A, GSK3B and GSKIP through GSKIP interaction; facilitates PKA-induced phosphorylation and regulates GSK3B activity. Interacts with ADCY8; inhibits adenylate cyclase activity through PKA phosphorylation. In terms of processing, phosphorylated by the activated catalytic chain. As to expression, four types of regulatory chains are found: I-alpha, I-beta, II-alpha, and II-beta. Their expression varies among tissues and is in some cases constitutive and in others inducible.

Its subcellular location is the cytoplasm. The protein resides in the cell membrane. Functionally, regulatory subunit of the cAMP-dependent protein kinases involved in cAMP signaling in cells. Type II regulatory chains mediate membrane association by binding to anchoring proteins, including the MAP2 kinase. In Mus musculus (Mouse), this protein is cAMP-dependent protein kinase type II-alpha regulatory subunit (Prkar2a).